We begin with the raw amino-acid sequence, 387 residues long: [LysW]-aminoadipate semialdehyde/glutamate semialdehyde transaminase (387 aa).

Pyridoxal 5'-phosphate is bound by residues 96 to 97 and Phe123; that span reads GT. Arg126 contributes to the substrate binding site. 207–210 is a binding site for pyridoxal 5'-phosphate; it reads DEVQ. Lys236 is modified (N6-(pyridoxal phosphate)lysine). Ser264 contributes to the substrate binding site. Thr265 contributes to the pyridoxal 5'-phosphate binding site.

The protein belongs to the class-III pyridoxal-phosphate-dependent aminotransferase family. LysJ subfamily. Homodimer. Requires pyridoxal 5'-phosphate as cofactor.

The protein resides in the cytoplasm. It carries out the reaction [amino-group carrier protein]-C-terminal-gamma-(L-lysyl)-L-glutamate + 2-oxoglutarate = [amino-group carrier protein]-C-terminal-N-(1-carboxy-5-oxopentan-1-yl)-L-glutamine + L-glutamate. It catalyses the reaction [amino-group carrier protein]-C-terminal-gamma-(L-ornithyl)-L-glutamate + 2-oxoglutarate = [amino-group carrier protein]-C-terminal-gamma-(L-glutamyl-5-semialdehyde)-L-glutamate + L-glutamate. It functions in the pathway amino-acid biosynthesis; L-lysine biosynthesis via AAA pathway; L-lysine from L-alpha-aminoadipate (Thermus route): step 4/5. It participates in amino-acid biosynthesis; L-arginine biosynthesis. Its function is as follows. Involved in both the arginine and lysine biosynthetic pathways. In Sulfurisphaera tokodaii (strain DSM 16993 / JCM 10545 / NBRC 100140 / 7) (Sulfolobus tokodaii), this protein is [LysW]-aminoadipate semialdehyde/glutamate semialdehyde transaminase.